We begin with the raw amino-acid sequence, 509 residues long: MWLLLAVFLLTLAYLFWPKTKHSGAKYPRSLPSLPLVGSLPFLPRRGQQHKNFFKLQEKYGPIYSFRLGSKTTVMIGHHQLAREVLLKKGKEFSGRPKVATLDILSDNQKGIAFADHGAHWQLHRKLALNAFALFKDGNLKLEKIINQEANVLCDFLATQHGEAIDLSEPLSLAVTNIISFICFNFSFKNEDPALKAIQNVNDGILEVLSKEVLLDIFPVLKIFPSKAMEKMKGYVQTRNELLNEILEKCQENFSSDSITNLLHILIQAKVNADNNNAGPDQDSKLLSSRHMLATIGDIFGAGVETTTSVIKWIVAYLLHHPSLKKRIQDDIDQIIGFNRTPAISDRNRLVLLEATIREVLRIRPVAPTLIPHKAVIDSSIGDLTIDKGTDVVVNLWALHHSEKEWQHPDLFMPERFLDPTGTQLISPSLSYLPFGAGPRSCVGEMLARQELFLFMSRLLQRFNLEIPDDGKLPSLEGHASLVLQIKPFKVKIEVRQAWKEAQAEGSTP.

Asn-202 is a binding site for substrate. Residue Cys-442 coordinates heme.

This sequence belongs to the cytochrome P450 family. Heme serves as cofactor.

Its subcellular location is the endoplasmic reticulum membrane. It localises to the microsome membrane. The enzyme catalyses a C21-steroid + reduced [NADPH--hemoprotein reductase] + O2 = a 17alpha-hydroxy-C21-steroid + oxidized [NADPH--hemoprotein reductase] + H2O + H(+). It catalyses the reaction progesterone + reduced [NADPH--hemoprotein reductase] + O2 = 17alpha-hydroxyprogesterone + oxidized [NADPH--hemoprotein reductase] + H2O + H(+). The catalysed reaction is pregnenolone + reduced [NADPH--hemoprotein reductase] + O2 = 17alpha-hydroxypregnenolone + oxidized [NADPH--hemoprotein reductase] + H2O + H(+). It carries out the reaction 17alpha-hydroxyprogesterone + reduced [NADPH--hemoprotein reductase] + O2 = androst-4-ene-3,17-dione + acetate + oxidized [NADPH--hemoprotein reductase] + H2O + 2 H(+). The enzyme catalyses 17alpha-hydroxyprogesterone + reduced [NADPH--hemoprotein reductase] + O2 = 16alpha,17alpha-dihydroxyprogesterone + oxidized [NADPH--hemoprotein reductase] + H2O + H(+). It catalyses the reaction 16alpha,17alpha-dihydroxyprogesterone + reduced [NADPH--hemoprotein reductase] + O2 = 6beta,16alpha,17alpha-trihydroxyprogesterone + oxidized [NADPH--hemoprotein reductase] + H2O + H(+). The catalysed reaction is 17alpha-hydroxypregnenolone + reduced [NADPH--hemoprotein reductase] + O2 = 3beta-hydroxyandrost-5-en-17-one + acetate + oxidized [NADPH--hemoprotein reductase] + H2O + 2 H(+). It carries out the reaction 16alpha,17alpha-dihydroxypregnenolone + reduced [NADPH--hemoprotein reductase] + O2 = 3beta,16alpha-dihydroxy-androst-5-en-17-one + acetate + oxidized [NADPH--hemoprotein reductase] + H2O + 2 H(+). The enzyme catalyses 3beta-hydroxyandrost-5-en-17-one + reduced [NADPH--hemoprotein reductase] + O2 = 3beta,16alpha-dihydroxy-androst-5-en-17-one + oxidized [NADPH--hemoprotein reductase] + H2O + H(+). It catalyses the reaction androst-4-ene-3,17-dione + reduced [NADPH--hemoprotein reductase] + O2 = 16alpha-hydroxyandrost-4-ene-3,17-dione + oxidized [NADPH--hemoprotein reductase] + H2O + H(+). Its pathway is steroid hormone biosynthesis. It participates in steroid biosynthesis; glucocorticoid biosynthesis. With respect to regulation, regulated predominantly by intracellular cAMP levels. The 17,20-lyase activity is stimulated by cytochrome b5, which acts as an allosteric effector increasing the Vmax of the lyase activity. A cytochrome P450 monooxygenase involved in corticoid and androgen biosynthesis. Catalyzes 17-alpha hydroxylation of C21 steroids, which is common for both pathways. A second oxidative step, required only for androgen synthesis, involves an acyl-carbon cleavage. The 17-alpha hydroxy intermediates, as part of adrenal glucocorticoids biosynthesis pathway, are precursors of cortisol. Hydroxylates steroid hormones, pregnenolone and progesterone to form 17-alpha hydroxy metabolites, followed by the cleavage of the C17-C20 bond to form C19 steroids, dehydroepiandrosterone (DHEA) and androstenedione. Has 16-alpha hydroxylase activity. Catalyzes 16-alpha hydroxylation of 17-alpha hydroxy pregnenolone, followed by the cleavage of the C17-C20 bond to form 16-alpha-hydroxy DHEA. Also 16-alpha hydroxylates androgens, relevant for estriol synthesis. Mechanistically, uses molecular oxygen inserting one oxygen atom into a substrate, and reducing the second into a water molecule, with two electrons provided by NADPH via cytochrome P450 reductase (CPR; NADPH-ferrihemoprotein reductase). This Bison bison (American bison) protein is Steroid 17-alpha-hydroxylase/17,20 lyase (CYP17A1).